A 32-amino-acid chain; its full sequence is Cytochrome b6-f complex subunit 6 (32 aa).

Residues 6–26 form a helical membrane-spanning segment; it reads VFYIVFIALFFGIAVGIIFAI.

This sequence belongs to the PetL family. The 4 large subunits of the cytochrome b6-f complex are cytochrome b6, subunit IV (17 kDa polypeptide, PetD), cytochrome f and the Rieske protein, while the 4 small subunits are PetG, PetL, PetM and PetN. The complex functions as a dimer.

It is found in the cellular thylakoid membrane. Component of the cytochrome b6-f complex, which mediates electron transfer between photosystem II (PSII) and photosystem I (PSI), cyclic electron flow around PSI, and state transitions. PetL is important for photoautotrophic growth as well as for electron transfer efficiency and stability of the cytochrome b6-f complex. The chain is Cytochrome b6-f complex subunit 6 from Mastigocladus laminosus (Fischerella sp.).